The following is a 335-amino-acid chain: uncharacterized protein (335 aa).

Positions 201–236 (GPMAKNKARRKEDNYDTHNCDDANQDKKEEAEGKNT) are disordered. A compositionally biased stretch (basic and acidic residues) spans 210–235 (RKEDNYDTHNCDDANQDKKEEAEGKN).

Dispensable for normal development and fertility. This is an uncharacterized protein from Homo sapiens (Human).